The primary structure comprises 400 residues: Acetate kinase (400 aa).

Asn-9 serves as a coordination point for Mg(2+). ATP is bound at residue Lys-16. Substrate is bound at residue Arg-90. Asp-147 functions as the Proton donor/acceptor in the catalytic mechanism. Residues 207-211 (HIGNG), 282-284 (DLR), and 330-334 (GIGEN) contribute to the ATP site. Residue Glu-385 coordinates Mg(2+).

This sequence belongs to the acetokinase family. Homodimer. It depends on Mg(2+) as a cofactor. Mn(2+) is required as a cofactor.

It localises to the cytoplasm. The catalysed reaction is acetate + ATP = acetyl phosphate + ADP. The protein operates within metabolic intermediate biosynthesis; acetyl-CoA biosynthesis; acetyl-CoA from acetate: step 1/2. Catalyzes the formation of acetyl phosphate from acetate and ATP. Can also catalyze the reverse reaction. The protein is Acetate kinase of Staphylococcus aureus (strain Mu3 / ATCC 700698).